Consider the following 122-residue polypeptide: Sterile alpha motif domain-containing protein 13 (122 aa).

In terms of domain architecture, SAM spans 51–119 (WAVMDVVNYF…KPLQTKHLKN (69 aa)).

This Homo sapiens (Human) protein is Sterile alpha motif domain-containing protein 13 (SAMD13).